The following is a 299-amino-acid chain: Glycine--tRNA ligase alpha subunit (299 aa).

This sequence belongs to the class-II aminoacyl-tRNA synthetase family. In terms of assembly, tetramer of two alpha and two beta subunits.

It is found in the cytoplasm. The catalysed reaction is tRNA(Gly) + glycine + ATP = glycyl-tRNA(Gly) + AMP + diphosphate. This Dictyoglomus turgidum (strain DSM 6724 / Z-1310) protein is Glycine--tRNA ligase alpha subunit.